The following is a 172-amino-acid chain: MQKYGSKKIGATSATSSNKQKVQIELTDEQRQEIKEAFDLFDMDGSGKIDAKELKVAMRALGFEPKKEEIKKMISGIDNGSGKIDFNDFLQLMTAKMSEKDSHAEIMKAFRLFDEDDSGFITFANLKRVAKDLGENMTDEELREMIEEADRSNQGQISKEDFLRIMKKTNLF.

A disordered region spans residues 1 to 23 (MQKYGSKKIGATSATSSNKQKVQ). The span at 12-21 (TSATSSNKQK) shows a compositional bias: polar residues. EF-hand domains are found at residues 29–64 (EQRQ…LGFE), 65–99 (PKKE…KMSE), 101–136 (DSHA…LGEN), and 137–172 (MTDE…TNLF). Ca(2+) contacts are provided by Asp42, Asp44, Ser46, Lys48, and Glu53.

Belongs to the centrin family. In terms of assembly, monomer.

It is found in the cytoplasm. The protein localises to the cytoskeleton. The protein resides in the microtubule organizing center. It localises to the centrosome. Functionally, plays a fundamental role in microtubule-organizing center structure and function. This chain is Caltractin (CTN), found in Naegleria gruberi (Amoeba).